Consider the following 250-residue polypeptide: MSKENKTTDFGFTQVPWEEKQKKVAGVFHSVAAKYDLMNDLMSFGIHRIWKKQTIAKSGVRKGDNVLDLAGGTGDLAYKFCQMVGQQGKVILSDINSSMLEVGKEKLTNKGCVGNIEYVQANAECLPFPDNYFDCITISFGLRNVTDKDKALASMCRVLKPGGRSLVLEFSKPIIPLLSKVYDEYSFKALPFLGKIITQDAESYKYLAESIRKHPDQQTLKQMMYDAGFDNVEYQNMTGGIVALHIGYKY.

S-adenosyl-L-methionine-binding positions include Thr73, Asp94, 122–123 (NA), and Ser139.

The protein belongs to the class I-like SAM-binding methyltransferase superfamily. MenG/UbiE family.

The enzyme catalyses a 2-demethylmenaquinol + S-adenosyl-L-methionine = a menaquinol + S-adenosyl-L-homocysteine + H(+). The catalysed reaction is a 2-methoxy-6-(all-trans-polyprenyl)benzene-1,4-diol + S-adenosyl-L-methionine = a 5-methoxy-2-methyl-3-(all-trans-polyprenyl)benzene-1,4-diol + S-adenosyl-L-homocysteine + H(+). It participates in quinol/quinone metabolism; menaquinone biosynthesis; menaquinol from 1,4-dihydroxy-2-naphthoate: step 2/2. The protein operates within cofactor biosynthesis; ubiquinone biosynthesis. Methyltransferase required for the conversion of demethylmenaquinol (DMKH2) to menaquinol (MKH2) and the conversion of 2-polyprenyl-6-methoxy-1,4-benzoquinol (DDMQH2) to 2-polyprenyl-3-methyl-6-methoxy-1,4-benzoquinol (DMQH2). This chain is Ubiquinone/menaquinone biosynthesis C-methyltransferase UbiE, found in Francisella tularensis subsp. tularensis (strain FSC 198).